A 702-amino-acid polypeptide reads, in one-letter code: Ribosomal RNA large subunit methyltransferase K/L (702 aa).

Positions 43–154 (LVYQSLMWSR…KETASIALDL (112 aa)) constitute a THUMP domain.

This sequence belongs to the methyltransferase superfamily. RlmKL family.

The protein localises to the cytoplasm. It carries out the reaction guanosine(2445) in 23S rRNA + S-adenosyl-L-methionine = N(2)-methylguanosine(2445) in 23S rRNA + S-adenosyl-L-homocysteine + H(+). The enzyme catalyses guanosine(2069) in 23S rRNA + S-adenosyl-L-methionine = N(2)-methylguanosine(2069) in 23S rRNA + S-adenosyl-L-homocysteine + H(+). Functionally, specifically methylates the guanine in position 2445 (m2G2445) and the guanine in position 2069 (m7G2069) of 23S rRNA. The protein is Ribosomal RNA large subunit methyltransferase K/L of Escherichia coli O6:K15:H31 (strain 536 / UPEC).